A 119-amino-acid polypeptide reads, in one-letter code: Large ribosomal subunit protein uL18 (119 aa).

It belongs to the universal ribosomal protein uL18 family. Part of the 50S ribosomal subunit; part of the 5S rRNA/L5/L18/L25 subcomplex. Contacts the 5S and 23S rRNAs.

Functionally, this is one of the proteins that bind and probably mediate the attachment of the 5S RNA into the large ribosomal subunit, where it forms part of the central protuberance. This chain is Large ribosomal subunit protein uL18, found in Cereibacter sphaeroides (strain ATCC 17029 / ATH 2.4.9) (Rhodobacter sphaeroides).